The primary structure comprises 292 residues: Phosphoribosylaminoimidazole-succinocarboxamide synthase (292 aa).

Belongs to the SAICAR synthetase family.

The enzyme catalyses 5-amino-1-(5-phospho-D-ribosyl)imidazole-4-carboxylate + L-aspartate + ATP = (2S)-2-[5-amino-1-(5-phospho-beta-D-ribosyl)imidazole-4-carboxamido]succinate + ADP + phosphate + 2 H(+). It functions in the pathway purine metabolism; IMP biosynthesis via de novo pathway; 5-amino-1-(5-phospho-D-ribosyl)imidazole-4-carboxamide from 5-amino-1-(5-phospho-D-ribosyl)imidazole-4-carboxylate: step 1/2. The chain is Phosphoribosylaminoimidazole-succinocarboxamide synthase from Thermodesulfovibrio yellowstonii (strain ATCC 51303 / DSM 11347 / YP87).